The chain runs to 462 residues: Calcitonin gene-related peptide type 1 receptor (462 aa).

The N-terminal stretch at 1–22 (MEKKYILYFLFLLPFFMILVIA) is a signal peptide. Over 23-140 (ETEEENPDDL…NTHEKVQTAL (118 aa)) the chain is Extracellular. 3 disulfides stabilise this stretch: Cys-49–Cys-75, Cys-66–Cys-106, and Cys-89–Cys-128. Residues Asn-67, Asn-119, and Asn-124 are each glycosylated (N-linked (GlcNAc...) asparagine). Residues 141-165 (NLFYLTIIGHGLSIASLLISLGIFF) traverse the membrane as a helical segment. The Cytoplasmic portion of the chain corresponds to 166 to 176 (YFKSLSCQRIT). The chain crosses the membrane as a helical span at residues 177-199 (LHKNLFFSFVCNSIVTIIHLTAV). The Extracellular portion of the chain corresponds to 200–210 (ANNQALVATNP). A helical membrane pass occupies residues 211 to 239 (VSCKVFQFIHLYLMGCNYFWMLCEGIYLH). Residues 240 to 253 (TLIVVAVFAEKQHL) are Cytoplasmic-facing. The helical transmembrane segment at 254 to 274 (MWYYFLGWGFPLIPACIHAVA) threads the bilayer. The Extracellular portion of the chain corresponds to 275-290 (RRLYYNDNCWISSDTH). Positions 289-290 (TH) are required for RAMP3 interaction. The helical transmembrane segment at 291–315 (LLYIIHGPICAALLVNLFFLLNIVR) threads the bilayer. At 316–330 (VLITKLKVTHQAESN) the chain is on the cytoplasmic side. A helical membrane pass occupies residues 331–352 (LYMKAVRATLILVPLLGIEFVL). The Extracellular portion of the chain corresponds to 353–367 (IPWRPEGKIAEEVYD). A helical membrane pass occupies residues 368–388 (YIMHILVHYQGLLVSTIYCFF). The Cytoplasmic portion of the chain corresponds to 389 to 462 (NGEVQAILRR…IVIKPEKLYD (74 aa)). Residues Ser-421 and Ser-446 each carry the phosphoserine modification.

It belongs to the G-protein coupled receptor 2 family. Heterodimer of CALCRL and RAMP1; the receptor complex functions as CGRP receptor. Heterodimer of CALCRL and RAMP2 or CALCRL and RAMP3; the complexes function as adrenomedullin receptor. As to expression, detected in lung and coronary artery.

Its subcellular location is the cell membrane. Its function is as follows. G protein-coupled receptor which specificity is determined by its interaction with receptor-activity-modifying proteins (RAMPs). Together with RAMP1, form the receptor complex for calcitonin-gene-related peptides CALCA/CGRP1 and CALCB/CGRP2. Together with RAMP2 or RAMP3, function as receptor complexes for adrenomedullin (ADM and ADM2). Ligand binding causes a conformation change that triggers signaling via guanine nucleotide-binding proteins (G proteins) and modulates the activity of downstream effectors. Activates cAMP-dependent pathway. In Sus scrofa (Pig), this protein is Calcitonin gene-related peptide type 1 receptor (CALCRL).